The following is a 102-amino-acid chain: Secretoglobin family 1D member (102 aa).

An N-terminal signal peptide occupies residues 1-21 (MRLSVTALLVTLALCYYEANA). The N-linked (GlcNAc...) asparagine glycan is linked to Asn-87.

It belongs to the secretoglobin family. Lipophilin subfamily.

It is found in the secreted. In terms of biological role, may bind androgens and other steroids. May be under transcriptional regulation of steroid hormones. In Bos taurus (Bovine), this protein is Secretoglobin family 1D member (SCGB1D).